Here is a 227-residue protein sequence, read N- to C-terminus: DNA repair protein RecO (227 aa).

The protein belongs to the RecO family.

Involved in DNA repair and RecF pathway recombination. The protein is DNA repair protein RecO of Pseudomonas putida (strain ATCC 700007 / DSM 6899 / JCM 31910 / BCRC 17059 / LMG 24140 / F1).